A 725-amino-acid polypeptide reads, in one-letter code: Protein ALEX (725 aa).

Disordered stretches follow at residues 1–93 (MSPS…ARAQ), 177–226 (GAIA…PLTD), 256–340 (EPPL…PSQP), 396–481 (PILT…SPLL), 508–528 (PMQVHWSGEPGHSQLLPPLGH), 584–624 (LPGL…AASS), and 638–675 (ATRSGATQSATSSPEPSEAASVYPSVPDHDPSAPGRPR). Residues 41 to 51 (HLRRKPCHSRH) show a composition bias toward basic residues. Polar residues predominate over residues 260 to 276 (GSTTTPLSIWTAPQSQV). Basic and acidic residues-rich tracts occupy residues 297–307 (QLSEKQPRWKE) and 314–326 (RWKEKSPLRREGT). Pro residues-rich tracts occupy residues 423–442 (PSQPPRQSLPPRPSLPPGQP) and 459–473 (RSLPPGQPLSPPRSP). 2 stretches are compositionally biased toward low complexity: residues 584–598 (LPGLTSTSGAEAAAG) and 643–658 (ATQSATSSPEPSEAAS).

The protein belongs to the ALEX family. In terms of assembly, interacts with the N-terminal region of the XLas isoforms of guanine nucleotide-binding protein G(s) subunit alpha.

The protein localises to the cell membrane. The protein resides in the cell projection. It localises to the ruffle. May inhibit the adenylyl cyclase-stimulating activity of guanine nucleotide-binding protein G(s) subunit alpha which is produced from the same locus in a different open reading frame. This is Protein ALEX from Mus musculus (Mouse).